Here is a 366-residue protein sequence, read N- to C-terminus: Left-right determination factor 1 (366 aa).

The first 21 residues, 1 to 21 (MQPLWLCWALWVLPLASPGAA), serve as a signal peptide directing secretion. The propeptide at 22–76 (LTGEQLLGSLLRQLQLKEVPTLDRADMEELVIPTHVRAQYVALLQRSHGDRSRGK) is or 135. An N-linked (GlcNAc...) asparagine glycan is attached at Asn158. Cystine bridges form between Cys251–Cys264, Cys263–Cys316, Cys293–Cys351, and Cys297–Cys353.

It belongs to the TGF-beta family. Post-translationally, the processing of the protein may also occur at the second R-X-X-R site located at AA 132-135. Processing appears to be regulated in a cell-type specific manner.

It localises to the secreted. In terms of biological role, required for left-right axis determination as a regulator of LEFTY2 and NODAL. This chain is Left-right determination factor 1 (LEFTY1), found in Homo sapiens (Human).